Here is a 524-residue protein sequence, read N- to C-terminus: Portal protein (524 aa).

A coiled-coil region spans residues 486–516 (AMKDILQMTDEEIEQEAKQIEEESKEARFQD). Basic and acidic residues predominate over residues 500–516 (QEAKQIEEESKEARFQD). Residues 500–524 (QEAKQIEEESKEARFQDPDQEQEDF) are disordered.

Belongs to the Tevenvirinae portal protein family. In terms of assembly, homododecamer. Interacts with the large terminase subunit. Interacts with the major capsid protein. Interacts with the capsid vertex protein.

It localises to the virion. It is found in the host cell inner membrane. In terms of biological role, forms the portal vertex of the capsid. This portal plays critical roles in head assembly, genome packaging, neck/tail attachment, and genome ejection. The portal protein multimerizes as a single ring-shaped homododecamer arranged around a central channel. Binds to the terminase subunits to form the packaging machine. Attaches to the host inner membrane most likely through interaction with host yidC and forms together with chaperone gp40 an initiator complex to form the prohead. The polypeptide is Portal protein (20) (Enterobacteria phage T4 (Bacteriophage T4)).